The primary structure comprises 845 residues: Alanine--tRNA ligase (845 aa).

H552, H556, C653, and H657 together coordinate Zn(2+).

The protein belongs to the class-II aminoacyl-tRNA synthetase family. Requires Zn(2+) as cofactor.

It is found in the cytoplasm. It catalyses the reaction tRNA(Ala) + L-alanine + ATP = L-alanyl-tRNA(Ala) + AMP + diphosphate. Functionally, catalyzes the attachment of alanine to tRNA(Ala) in a two-step reaction: alanine is first activated by ATP to form Ala-AMP and then transferred to the acceptor end of tRNA(Ala). Also edits incorrectly charged Ser-tRNA(Ala) and Gly-tRNA(Ala) via its editing domain. This chain is Alanine--tRNA ligase, found in Campylobacter hominis (strain ATCC BAA-381 / DSM 21671 / CCUG 45161 / LMG 19568 / NCTC 13146 / CH001A).